The following is a 282-amino-acid chain: Acyl-CoA-binding domain-containing protein 6 (282 aa).

Polar residues predominate over residues 1 to 12; it reads MASSFLPSGATT. Positions 1 to 34 are disordered; it reads MASSFLPSGATTGDSGGELSSGDDSGDVESLQSP. A compositionally biased stretch (low complexity) spans 17–31; that stretch reads GELSSGDDSGDVESL. Serine 41 is modified (phosphoserine). The ACB domain maps to 42–127; that stretch reads LPELFEKAAE…VKKLDPSWNP (86 aa). An acyl-CoA contacts are provided by residues 69-73 and lysine 95; that span reads YARYK. Serine 106 is modified (phosphoserine). Tyrosine 114 is a binding site for an acyl-CoA. 2 ANK repeats span residues 191–220 and 224–253; these read EGRT…DINC and EGQT…DPTL.

Monomer.

The protein localises to the cytoplasm. Functionally, binds long-chain acyl-coenzyme A molecules with a strong preference for unsaturated C18:1-CoA, lower affinity for unsaturated C20:4-CoA, and very weak affinity for saturated C16:0-CoA. Does not bind fatty acids. The sequence is that of Acyl-CoA-binding domain-containing protein 6 (ACBD6) from Bos taurus (Bovine).